Consider the following 395-residue polypeptide: Selection and upkeep of intraepithelial T-cells protein 7 (395 aa).

Residues 1–25 (MMKPEFFCFSGFCVYFLFLQVVVSS) form the signal peptide. In terms of domain architecture, Ig-like V-type spans 26-141 (EKLRVTTPTR…DAAIMNLNVT (116 aa)). Residues 26–248 (EKLRVTTPTR…FNRDRIWMES (223 aa)) lie on the Extracellular side of the membrane. A disulfide bridge connects residues cysteine 49 and cysteine 123. N-linked (GlcNAc...) asparagine glycans are attached at residues asparagine 92 and asparagine 139. Residues 142 to 233 (AVGLETEIHV…TGEEKQTSII (92 aa)) enclose the Ig-like C1-type domain. Residues cysteine 163 and cysteine 217 are joined by a disulfide bond. The helical transmembrane segment at 249 to 269 (LASIVWIMLSVYILYIICFYW) threads the bilayer. Over 270 to 287 (RTGCASGCLSKCFCVVTS) the chain is Cytoplasmic. The helical transmembrane segment at 288-308 (WPVQIVHLLFCTGTFFAIYLP) threads the bilayer. At 309 to 329 (HRSRVSLSDPQFPLYNNWITE) the chain is on the extracellular side. Residues 330-350 (LLFVILFLTICFALPIILLFI) form a helical membrane-spanning segment. At 351-395 (QFQFTSLTKWEKNKDGIMDQPRLGKAHETSSLYRKKTGKSWEQEK) the chain is on the cytoplasmic side. The interval 371–395 (PRLGKAHETSSLYRKKTGKSWEQEK) is disordered.

It belongs to the SKINT family. Expressed in skin, thymus, testis and, to a lower extent, bladder.

It is found in the membrane. May act by engaging a cell surface molecule on immature T-cells in the embryonic thymus. This chain is Selection and upkeep of intraepithelial T-cells protein 7 (Skint7), found in Mus musculus (Mouse).